The following is a 100-amino-acid chain: uncharacterized protein (100 aa).

The next 2 membrane-spanning stretches (helical) occupy residues 17 to 37 (IIIL…SVSF) and 78 to 98 (MVDK…TIPF).

The protein localises to the endoplasmic reticulum membrane. This is an uncharacterized protein from Saccharomyces cerevisiae (strain ATCC 204508 / S288c) (Baker's yeast).